A 1162-amino-acid chain; its full sequence is Carbamoyl phosphate synthase large chain (1162 aa).

Residues 1–456 are carboxyphosphate synthetic domain; sequence MPKRTDIKSI…SLQKALRGLE (456 aa). The ATP site is built by Arg-129, Arg-222, Gly-228, Gly-229, Glu-261, Val-263, Glu-268, Gly-294, Val-295, His-296, Gln-338, and Glu-352. The 196-residue stretch at 186 to 381 folds into the ATP-grasp 1 domain; sequence ETEWQLGEVE…IAKVAAKLAV (196 aa). Residues Gln-338, Glu-352, and Asn-354 each coordinate Mg(2+). Residues Gln-338, Glu-352, and Asn-354 each coordinate Mn(2+). Residues 457 to 613 form an oligomerization domain region; it reads TGLTGFDEIA…PFVGQPRSEA (157 aa). The interval 614-1025 is carbamoyl phosphate synthetic domain; the sequence is EVSDRKKVVI…AFAKAQLGAG (412 aa). The ATP-grasp 2 domain maps to 742–954; it reads QKLLIKLDLN…IAKVAARIMA (213 aa). ATP contacts are provided by Arg-778, Thr-838, Leu-840, Glu-845, Gly-870, Ile-871, His-872, Ser-873, Gln-913, and Glu-925. Mg(2+) contacts are provided by Gln-913, Glu-925, and Asn-927. Residues Gln-913, Glu-925, and Asn-927 each coordinate Mn(2+). Positions 1026 to 1162 constitute an MGS-like domain; the sequence is VELPREGTVF…VRPLQDYFRS (137 aa). The tract at residues 1026–1162 is allosteric domain; the sequence is VELPREGTVF…VRPLQDYFRS (137 aa).

Belongs to the CarB family. As to quaternary structure, composed of two chains; the small (or glutamine) chain promotes the hydrolysis of glutamine to ammonia, which is used by the large (or ammonia) chain to synthesize carbamoyl phosphate. Tetramer of heterodimers (alpha,beta)4. Mg(2+) is required as a cofactor. The cofactor is Mn(2+).

It carries out the reaction hydrogencarbonate + L-glutamine + 2 ATP + H2O = carbamoyl phosphate + L-glutamate + 2 ADP + phosphate + 2 H(+). The enzyme catalyses hydrogencarbonate + NH4(+) + 2 ATP = carbamoyl phosphate + 2 ADP + phosphate + 2 H(+). Its pathway is amino-acid biosynthesis; L-arginine biosynthesis; carbamoyl phosphate from bicarbonate: step 1/1. It participates in pyrimidine metabolism; UMP biosynthesis via de novo pathway; (S)-dihydroorotate from bicarbonate: step 1/3. Large subunit of the glutamine-dependent carbamoyl phosphate synthetase (CPSase). CPSase catalyzes the formation of carbamoyl phosphate from the ammonia moiety of glutamine, carbonate, and phosphate donated by ATP, constituting the first step of 2 biosynthetic pathways, one leading to arginine and/or urea and the other to pyrimidine nucleotides. The large subunit (synthetase) binds the substrates ammonia (free or transferred from glutamine from the small subunit), hydrogencarbonate and ATP and carries out an ATP-coupled ligase reaction, activating hydrogencarbonate by forming carboxy phosphate which reacts with ammonia to form carbamoyl phosphate. This chain is Carbamoyl phosphate synthase large chain, found in Brucella melitensis biotype 1 (strain ATCC 23456 / CCUG 17765 / NCTC 10094 / 16M).